A 52-amino-acid chain; its full sequence is Repressor-like protein SSo7c3 (52 aa).

The 48-residue stretch at 4–51 (EEVVKVSRNYQVTIPAKVRQKFPVKEGDLVKVIYDENGGVVKIQILDS) folds into the SpoVT-AbrB domain.

The sequence is that of Repressor-like protein SSo7c3 from Saccharolobus solfataricus (strain ATCC 35092 / DSM 1617 / JCM 11322 / P2) (Sulfolobus solfataricus).